The primary structure comprises 1073 residues: Probable cellulose synthase A catalytic subunit 2 [UDP-forming] (1073 aa).

Topologically, residues 1–270 (MDGAKSGKQC…SSSRINPYRM (270 aa)) are cytoplasmic. Cys13, Cys16, Cys32, Cys35, Cys40, Cys43, Cys55, and Cys58 together coordinate Zn(2+). An RING-type; degenerate zinc finger spans residues 13-59 (CQICGDGVGTAADGELFTACDVCGFPVCRPCYEYERKDGSQACPQCK). Residues 66–98 (KGSPPILGDESDDVDADDASDVNYPTSGNQDHK) are disordered. Residues 74 to 85 (DESDDVDADDAS) are compositionally biased toward acidic residues. A helical membrane pass occupies residues 271–291 (VIVLRLIVLCIFLHYRITNPV). Topologically, residues 292-293 (RN) are extracellular. The helical transmembrane segment at 294–314 (AYPLWLLSVICEIWFALSWIL) threads the bilayer. Topologically, residues 315-856 (DQFPKWSPIN…INTTIYPLTS (542 aa)) are cytoplasmic. 4 residues coordinate UDP-alpha-D-glucose: Ser353, Lys359, Glu360, and Asp389. Asp389 is a catalytic residue. Residues 443-470 (VKDRRAMKREYEEFKVRVNALVAKAQKV) are a coiled coil. Lys530 is a binding site for UDP-alpha-D-glucose. Residues Lys531 and Asp555 each coordinate Mn(2+). Residues 655 to 676 (GGRKKTKKSKEKSTEKKKSHKH) are disordered. The active site involves Asp773. The chain crosses the membrane as a helical span at residues 857 to 877 (IPLLLYCILPAICLLTGKFII). Residues 878 to 882 (PEISN) lie on the Extracellular side of the membrane. A helical membrane pass occupies residues 883–903 (FASIWFISLFLSIFATGILEM). Topologically, residues 904–918 (RWSGVGIDEWWRNEQ) are cytoplasmic. Residues 919–939 (FWVIGGISAHLFAVFQGLLKV) traverse the membrane as a helical segment. The Extracellular segment spans residues 940-969 (LAGIDTSFTVTSKASDEEGDFAELYMFKWT). A helical transmembrane segment spans residues 970–990 (TLLIPPTTILIINLVGVVAGI). The Cytoplasmic segment spans residues 991–1001 (SYAINSGYQSW). A helical membrane pass occupies residues 1002–1022 (GPLFGKLFFAFWVIVHLYPFL). Topologically, residues 1023–1031 (KGLMGRQNR) are extracellular. Residues 1032–1052 (TPTIVVVWAILLASIFSLLWV) traverse the membrane as a helical segment. Topologically, residues 1053 to 1073 (RIDPFTTRVTGPDTQKCGINC) are cytoplasmic.

The protein belongs to the glycosyltransferase 2 family. Plant cellulose synthase subfamily. Requires Mn(2+) as cofactor. The cofactor is Zn(2+).

Its subcellular location is the cell membrane. The enzyme catalyses [(1-&gt;4)-beta-D-glucosyl](n) + UDP-alpha-D-glucose = [(1-&gt;4)-beta-D-glucosyl](n+1) + UDP + H(+). It participates in glycan metabolism; plant cellulose biosynthesis. Its function is as follows. Probable catalytic subunit of cellulose synthase terminal complexes ('rosettes'), required for beta-1,4-glucan microfibril crystallization, a major mechanism of the cell wall formation. This is Probable cellulose synthase A catalytic subunit 2 [UDP-forming] (CESA2) from Oryza sativa subsp. japonica (Rice).